We begin with the raw amino-acid sequence, 534 residues long: MAFVLMNNTNAFLVTLLLLSLSYIPLSFSTIQQDFVMCLVDNSDASFPMDSSFFTHDLNASSFKLALETSAQNLRYLMPSNPKPEFIFEPLYETHVQAAVLCAKKLKLHLRLRSGGHDYEGLSYVSEMETAFVIVDLSKLRQISVDIESNSAWVHAGASIGEVYYRIQEKSKIHGFPAGLCTSLGIGGHIIGGAYGSMMRKFGLGADNVLDARIVDADGKILNRAAMGEDVFWAIRGGGGGSFGVILAWKIKLVPVPEIVTVFTVTRTLEQDGTKLLYKWQQVADKLDEDLFIRVIIQPTSKTPKSKERTISTSYQGQFLGDANRLLQVMQRSFPQLGLTKKDCLETSWIKSVMYIAGFPSTAPSEALLDGKSLFKNYFKAKSDYVEEPIPVEGLEGLWEKLLEEDSPLTIWNPYGGMMAKIPETETPFPHRSGTLFKIQWLTLWQDGKTSEAKHMGWMREMYSYMEQYVSKSPRSAYVNYRDLDLGMNGKGSDAREWGNRYFKGNFERLVEIKAKFDPENFFRHEQSIPTELE.

A signal peptide spans 1–29; it reads MAFVLMNNTNAFLVTLLLLSLSYIPLSFS. Residues Asn-7 and Asn-59 are each glycosylated (N-linked (GlcNAc...) asparagine). Cys-38 and Cys-102 form a disulfide bridge. The segment at residues 117 to 181 is a cross-link (6-(S-cysteinyl)-8alpha-(pros-histidyl)-FAD (His-Cys)); sequence HDYEGLSYVS…KIHGFPAGLC (65 aa).

This sequence belongs to the oxygen-dependent FAD-linked oxidoreductase family. Requires FAD as cofactor. The FAD cofactor is bound via a bicovalent 6-S-cysteinyl, 8alpha-N1-histidyl FAD linkage.

It is found in the secreted. It localises to the cell wall. It catalyses the reaction (E)-4-coumaroyl alcohol + A = (E)-4-coumaraldehyde + AH2. It carries out the reaction (E)-coniferol + A = (E)-coniferaldehyde + AH2. The catalysed reaction is (E)-sinapyl alcohol + A = (E)-sinapaldehyde + AH2. Its pathway is phenylpropanoid metabolism. Its function is as follows. Mediates oxidation of p-hydroxylated derivatives of cinnamyl alcohol (i.e. the monolignols p-coumaryl-, coniferyl-, and sinapyl alcohol) to their corresponding aldehydes. The electron acceptor required for these reactions is not known, but does not seem to be dioxygen. Is much less efficient towards cinnamyl alcohol. The polypeptide is Monolignol oxidoreductase AtBBE-like 13 (Arabidopsis thaliana (Mouse-ear cress)).